Here is a 434-residue protein sequence, read N- to C-terminus: 3-phosphoshikimate 1-carboxyvinyltransferase (434 aa).

3 residues coordinate 3-phosphoshikimate: Lys22, Ser23, and Arg27. Residue Lys22 participates in phosphoenolpyruvate binding. Gly93 and Arg121 together coordinate phosphoenolpyruvate. Residues Ser168, Ser169, Gln170, Ser199, Asp320, and Lys347 each contribute to the 3-phosphoshikimate site. Gln170 serves as a coordination point for phosphoenolpyruvate. The Proton acceptor role is filled by Asp320. Phosphoenolpyruvate-binding residues include Arg351, Arg394, and Lys419.

It belongs to the EPSP synthase family. In terms of assembly, monomer.

It localises to the cytoplasm. The catalysed reaction is 3-phosphoshikimate + phosphoenolpyruvate = 5-O-(1-carboxyvinyl)-3-phosphoshikimate + phosphate. It functions in the pathway metabolic intermediate biosynthesis; chorismate biosynthesis; chorismate from D-erythrose 4-phosphate and phosphoenolpyruvate: step 6/7. Catalyzes the transfer of the enolpyruvyl moiety of phosphoenolpyruvate (PEP) to the 5-hydroxyl of shikimate-3-phosphate (S3P) to produce enolpyruvyl shikimate-3-phosphate and inorganic phosphate. This chain is 3-phosphoshikimate 1-carboxyvinyltransferase, found in Burkholderia ambifaria (strain ATCC BAA-244 / DSM 16087 / CCUG 44356 / LMG 19182 / AMMD) (Burkholderia cepacia (strain AMMD)).